The sequence spans 242 residues: Interleukin-34 (242 aa).

An N-terminal signal peptide occupies residues 1-20 (MPRGFTWLRYLGIFLGVALG). N-linked (GlcNAc...) asparagine glycosylation is present at Asn76. The interval 210 to 242 (TQLYPPPPWSPSSPPHSTGSVRPVRAQGEGLLP) is disordered. Residues 213–223 (YPPPPWSPSSP) are compositionally biased toward pro residues.

It belongs to the IL-34 family. In terms of assembly, homodimer. Interacts with CSF1R. In terms of tissue distribution, detected in the sinusoidal epithelium in the red pulp of spleen (at protein level). Predominantly expressed in spleen. Also detected in a range of other tissues including heart, brain, lung, liver, kidney, thymus, testis, ovary, small intestine, prostate and colon.

Its subcellular location is the secreted. Its function is as follows. Cytokine that promotes the proliferation, survival and differentiation of monocytes and macrophages. Promotes the release of pro-inflammatory chemokines, and thereby plays an important role in innate immunity and in inflammatory processes. Plays an important role in the regulation of osteoclast proliferation and differentiation, and in the regulation of bone resorption. Signaling via CSF1R and its downstream effectors stimulates phosphorylation of MAPK1/ERK2 AND MAPK3/ERK1. The chain is Interleukin-34 (IL34) from Homo sapiens (Human).